A 258-amino-acid polypeptide reads, in one-letter code: Acetylglutamate kinase (258 aa).

Substrate-binding positions include 44-45 (GG), arginine 66, and asparagine 158. Residues 181–186 (DVSGIL) and 209–211 (IIT) each bind ATP.

The protein belongs to the acetylglutamate kinase family. ArgB subfamily. In terms of assembly, homodimer.

It is found in the cytoplasm. It catalyses the reaction N-acetyl-L-glutamate + ATP = N-acetyl-L-glutamyl 5-phosphate + ADP. The protein operates within amino-acid biosynthesis; L-arginine biosynthesis; N(2)-acetyl-L-ornithine from L-glutamate: step 2/4. Its function is as follows. Catalyzes the ATP-dependent phosphorylation of N-acetyl-L-glutamate. This chain is Acetylglutamate kinase, found in Yersinia pestis bv. Antiqua (strain Antiqua).